The following is a 349-amino-acid chain: MRVLLRPVLVPELGLVVLKPGRESIQIFHNPRVLVEPEPKSMRNLPSGVVPAVRQPLAEDKTLLPFFSNERVIRAAGGVGALSDWLLRHVTSCQWPNGDYHHTETVIHRYGTGAMVLCWHCDNQLRDQTSESLELLAQQNLTAWVIDVIRHAISGTQERELSLAELSWWAVCNQVVDALPEAVSRRSLGLPAEKICSVYRESDIVPGELTATSILKQRTKNLAPLPYAHQQQKSPQEKTVVSITVDPESPESFMKLPKRRRWVKEKYTRWVKTQPCACCGMPADDPHHLIGHGQGGMGTKAHDLFVLPLCRKHHNELHTDTVAFEDKYGSQLELIFRFIDRALAIGVLA.

This is an uncharacterized protein from Escherichia coli (strain K12).